We begin with the raw amino-acid sequence, 56 residues long: Ferredoxin (56 aa).

2 4Fe-4S ferredoxin-type domains span residues 2–28 (AYKI…SQGD) and 29–56 (TQFV…PVQE). [4Fe-4S] cluster-binding residues include cysteine 9, cysteine 12, cysteine 15, cysteine 19, cysteine 38, cysteine 41, cysteine 44, and cysteine 48.

Requires [4Fe-4S] cluster as cofactor.

Functionally, ferredoxins are iron-sulfur proteins that transfer electrons in a wide variety of metabolic reactions. The chain is Ferredoxin (fer) from Clostridium perfringens (strain 13 / Type A).